We begin with the raw amino-acid sequence, 432 residues long: PC-esterase domain-containing protein 1B (432 aa).

2 disordered regions span residues 264 to 293 (EWIK…LSPP) and 398 to 432 (RGFG…PRPQ).

It belongs to the PC-esterase family.

This Homo sapiens (Human) protein is PC-esterase domain-containing protein 1B.